A 257-amino-acid chain; its full sequence is 1-(5-phosphoribosyl)-5-[(5-phosphoribosylamino)methylideneamino] imidazole-4-carboxamide isomerase (257 aa).

Catalysis depends on aspartate 8, which acts as the Proton acceptor. Aspartate 129 serves as the catalytic Proton donor.

This sequence belongs to the HisA/HisF family.

Its subcellular location is the cytoplasm. It carries out the reaction 1-(5-phospho-beta-D-ribosyl)-5-[(5-phospho-beta-D-ribosylamino)methylideneamino]imidazole-4-carboxamide = 5-[(5-phospho-1-deoxy-D-ribulos-1-ylimino)methylamino]-1-(5-phospho-beta-D-ribosyl)imidazole-4-carboxamide. The protein operates within amino-acid biosynthesis; L-histidine biosynthesis; L-histidine from 5-phospho-alpha-D-ribose 1-diphosphate: step 4/9. In Crocosphaera subtropica (strain ATCC 51142 / BH68) (Cyanothece sp. (strain ATCC 51142)), this protein is 1-(5-phosphoribosyl)-5-[(5-phosphoribosylamino)methylideneamino] imidazole-4-carboxamide isomerase.